The sequence spans 456 residues: Glycosyl hydrolase family 109 protein 2 (456 aa).

The tat-type signal signal peptide spans 1-33 (MSGFDRRSFLKASMVTAAATALAACASSERATG). Residues 63–64 (ER), aspartate 85, 134–137 (WAWH), 154–155 (EV), and asparagine 183 contribute to the NAD(+) site. Substrate contacts are provided by residues tyrosine 212, arginine 231, 243 to 246 (YPTH), and tyrosine 325. Tyrosine 243 contributes to the NAD(+) binding site.

This sequence belongs to the Gfo/Idh/MocA family. Glycosyl hydrolase 109 subfamily. Requires NAD(+) as cofactor. Predicted to be exported by the Tat system. The position of the signal peptide cleavage has not been experimentally proven.

Functionally, glycosidase. This is Glycosyl hydrolase family 109 protein 2 from Shewanella sp. (strain MR-4).